Reading from the N-terminus, the 208-residue chain is dTTP/UTP pyrophosphatase (208 aa).

Aspartate 79 serves as the catalytic Proton acceptor.

The protein belongs to the Maf family. YhdE subfamily. A divalent metal cation serves as cofactor.

The protein resides in the cytoplasm. It carries out the reaction dTTP + H2O = dTMP + diphosphate + H(+). The catalysed reaction is UTP + H2O = UMP + diphosphate + H(+). Functionally, nucleoside triphosphate pyrophosphatase that hydrolyzes dTTP and UTP. May have a dual role in cell division arrest and in preventing the incorporation of modified nucleotides into cellular nucleic acids. The sequence is that of dTTP/UTP pyrophosphatase from Mesorhizobium japonicum (strain LMG 29417 / CECT 9101 / MAFF 303099) (Mesorhizobium loti (strain MAFF 303099)).